The sequence spans 594 residues: MNFIDVAKIYEKIEATTGRLEMIDYLKNLFLSTPPEILDKIVYLTLGNIAASFEGIELGVGEKLFLRALSLATGIPQERLEEEYPKLGDIGKLAEWAVSKKAAQSFFTEDLTVERVFDTLSKVARATGEGAQDLKVRLIAGILSDAKPLEARYIARIVTEKLRLGVRDMTVLDALSEAFLKGRAYRDKLERKYNIYPDIGKIAKVVAEKGIKGLDEITITLGIPVRPMLAQRLRSAEEIMEKIGPRIFAEFKYDGERMQIHVWKDGKVKIFSRRLEDITEPYPDVREYVSKAVEGHEVVLDCETVAINPDTGEILPFQELMHRRRKYGVEEAMKTYPTVTYAFDLLYLDGRELLDEQLDDRRKILKEILKENEKARLVQYEEIDGNVEELERFFEHAVEMGTEGLVVKDPKSIYQAGVRGWSWIKLKRSYISKMIEPVDLVVVGAFWGKGKRAGTYGALLMAAYSPEEDVFKTVCKMGSGFTDEELARMPKLLEDYKIDHKHPSVISNIEADVYFVPVKVAQVLGDEITLSPTHTCGWNKVRKNAGLAIRFPRFMGWRDDKGPQDATTEEEIIEMYKEQLKVVEVEETKSEEEA.

ATP is bound at residue glutamate 250. Lysine 252 functions as the N6-AMP-lysine intermediate in the catalytic mechanism. Arginine 257, arginine 273, glutamate 303, phenylalanine 343, arginine 419, and lysine 425 together coordinate ATP.

Belongs to the ATP-dependent DNA ligase family. The cofactor is Mg(2+).

The enzyme catalyses ATP + (deoxyribonucleotide)n-3'-hydroxyl + 5'-phospho-(deoxyribonucleotide)m = (deoxyribonucleotide)n+m + AMP + diphosphate.. DNA ligase that seals nicks in double-stranded DNA during DNA replication, DNA recombination and DNA repair. In Korarchaeum cryptofilum (strain OPF8), this protein is DNA ligase 2.